The sequence spans 213 residues: Adenylate kinase (213 aa).

10-15 (GSGKGT) is a binding site for ATP. The NMP stretch occupies residues 30-59 (SVGDLLRNIISSSSELGKKIKGTVESGNLI). AMP contacts are provided by residues R36, 57–59 (NLI), 83–86 (GFPR), and Q90. The interval 125 to 160 (NRLACLDCKSIYSVSSFKSTTCAKCKSTRLEKRIDD) is LID. An ATP-binding site is contributed by R126. Zn(2+)-binding residues include C129 and C132. 135-136 (IY) is a binding site for ATP. Zn(2+) contacts are provided by C146 and C149. 2 residues coordinate AMP: R157 and R169. ATP is bound at residue L195.

The protein belongs to the adenylate kinase family. In terms of assembly, monomer.

It is found in the cytoplasm. The enzyme catalyses AMP + ATP = 2 ADP. It participates in purine metabolism; AMP biosynthesis via salvage pathway; AMP from ADP: step 1/1. In terms of biological role, catalyzes the reversible transfer of the terminal phosphate group between ATP and AMP. Plays an important role in cellular energy homeostasis and in adenine nucleotide metabolism. In Wolbachia sp. subsp. Drosophila simulans (strain wRi), this protein is Adenylate kinase.